The chain runs to 198 residues: Probable nicotinate-nucleotide adenylyltransferase (198 aa).

This sequence belongs to the NadD family.

The catalysed reaction is nicotinate beta-D-ribonucleotide + ATP + H(+) = deamido-NAD(+) + diphosphate. It participates in cofactor biosynthesis; NAD(+) biosynthesis; deamido-NAD(+) from nicotinate D-ribonucleotide: step 1/1. Functionally, catalyzes the reversible adenylation of nicotinate mononucleotide (NaMN) to nicotinic acid adenine dinucleotide (NaAD). This chain is Probable nicotinate-nucleotide adenylyltransferase, found in Herpetosiphon aurantiacus (strain ATCC 23779 / DSM 785 / 114-95).